A 284-amino-acid polypeptide reads, in one-letter code: 4-diphosphocytidyl-2-C-methyl-D-erythritol kinase (284 aa).

The active site involves Lys-14. Residue 98–108 (PMGGGLGGGSS) coordinates ATP. Asp-140 is a catalytic residue.

The protein belongs to the GHMP kinase family. IspE subfamily.

It carries out the reaction 4-CDP-2-C-methyl-D-erythritol + ATP = 4-CDP-2-C-methyl-D-erythritol 2-phosphate + ADP + H(+). It functions in the pathway isoprenoid biosynthesis; isopentenyl diphosphate biosynthesis via DXP pathway; isopentenyl diphosphate from 1-deoxy-D-xylulose 5-phosphate: step 3/6. In terms of biological role, catalyzes the phosphorylation of the position 2 hydroxy group of 4-diphosphocytidyl-2C-methyl-D-erythritol. In Shewanella baltica (strain OS155 / ATCC BAA-1091), this protein is 4-diphosphocytidyl-2-C-methyl-D-erythritol kinase.